A 299-amino-acid chain; its full sequence is MAYNNRPDASTAFTFDNDDRFVNQQPKGPDPLSANWSYDSAIDLFSLNTMLPETFPLDIPNDMLLDPKDFPTDLFAPPADISGFAISHSGEDSLSSDQESEDQPWSPAYRVSSLDSTTPDAPTVSPRSTEKPATRRRTTTQKREQATRWSSSPEMTPQEYPVTSQATTSPAPAPVSPPAASTSRKNSRSLSTDSQTATGRNAAKRAAHNIIEKRYRTNMNAKFVALEKAMSGSGVQKPTKGGSGPASLKKSEILTNAIAYMQELQDQNAALQKELALLKQNLLPGGLWRHNKENDKFRT.

Disordered stretches follow at residues 1–33 (MAYNNRPDASTAFTFDNDDRFVNQQPKGPDPLS) and 81–204 (ISGF…NAAK). Residues 161 to 170 (PVTSQATTSP) show a composition bias toward low complexity. A compositionally biased stretch (polar residues) spans 188–199 (RSLSTDSQTATG). A basic motif region spans residues 203-216 (AKRAAHNIIEKRYR). One can recognise a bHLH domain in the interval 203–264 (AKRAAHNIIE…TNAIAYMQEL (62 aa)). The interval 217 to 264 (TNMNAKFVALEKAMSGSGVQKPTKGGSGPASLKKSEILTNAIAYMQEL) is helix-loop-helix motif. Residues 254–281 (LTNAIAYMQELQDQNAALQKELALLKQN) adopt a coiled-coil conformation.

The protein resides in the nucleus. Its function is as follows. Key transcription factors critical for hypoxia adaptation and virulence. Plays a major role in regulation of heme biosynthesis and carbohydrate metabolism early in the response to hypoxia. This Aspergillus fumigatus (strain ATCC MYA-4609 / CBS 101355 / FGSC A1100 / Af293) (Neosartorya fumigata) protein is Transcription factor srbB.